Reading from the N-terminus, the 322-residue chain is Cytochrome f (322 aa).

The N-terminal stretch at 1–36 is a signal peptide; that stretch reads MQKNRNTFSWVKEQMTRCISVSMMIYVITRASISNA. Heme-binding residues include Tyr-37, Cys-57, Cys-60, and His-61. A helical transmembrane segment spans residues 288–308; that stretch reads IQGLLFFLASVILAQIFLVLK.

The protein belongs to the cytochrome f family. The 4 large subunits of the cytochrome b6-f complex are cytochrome b6, subunit IV (17 kDa polypeptide, petD), cytochrome f and the Rieske protein, while the 4 small subunits are PetG, PetL, PetM and PetN. The complex functions as a dimer. It depends on heme as a cofactor.

Its subcellular location is the plastid. It localises to the chloroplast thylakoid membrane. In terms of biological role, component of the cytochrome b6-f complex, which mediates electron transfer between photosystem II (PSII) and photosystem I (PSI), cyclic electron flow around PSI, and state transitions. This is Cytochrome f from Nymphaea alba (White water-lily).